We begin with the raw amino-acid sequence, 530 residues long: Phosphoenolpyruvate carboxykinase (ATP) (530 aa).

Substrate contacts are provided by Arg-60, Tyr-195, and Lys-201. Residues Lys-201, His-221, and 237–245 each bind ATP; that span reads GLSGTGKTT. Positions 201 and 221 each coordinate Mn(2+). Asp-258 provides a ligand contact to Mn(2+). ATP contacts are provided by residues Glu-286, Arg-324, 443-444, and Ser-449; that span reads RI. Arg-324 is a substrate binding site.

Belongs to the phosphoenolpyruvate carboxykinase (ATP) family. Mn(2+) is required as a cofactor.

Its subcellular location is the cytoplasm. The catalysed reaction is oxaloacetate + ATP = phosphoenolpyruvate + ADP + CO2. The protein operates within carbohydrate biosynthesis; gluconeogenesis. Functionally, involved in the gluconeogenesis. Catalyzes the conversion of oxaloacetate (OAA) to phosphoenolpyruvate (PEP) through direct phosphoryl transfer between the nucleoside triphosphate and OAA. This Pelobacter propionicus (strain DSM 2379 / NBRC 103807 / OttBd1) protein is Phosphoenolpyruvate carboxykinase (ATP).